Here is a 186-residue protein sequence, read N- to C-terminus: Acireductone dioxygenase (186 aa).

Fe(2+) contacts are provided by H96, H98, E102, and H140. Residues H96, H98, E102, and H140 each contribute to the Ni(2+) site.

It belongs to the acireductone dioxygenase (ARD) family. Monomer. Requires Fe(2+) as cofactor. Ni(2+) serves as cofactor.

The catalysed reaction is 1,2-dihydroxy-5-(methylsulfanyl)pent-1-en-3-one + O2 = 3-(methylsulfanyl)propanoate + CO + formate + 2 H(+). The enzyme catalyses 1,2-dihydroxy-5-(methylsulfanyl)pent-1-en-3-one + O2 = 4-methylsulfanyl-2-oxobutanoate + formate + 2 H(+). It participates in amino-acid biosynthesis; L-methionine biosynthesis via salvage pathway; L-methionine from S-methyl-5-thio-alpha-D-ribose 1-phosphate: step 5/6. Catalyzes 2 different reactions between oxygen and the acireductone 1,2-dihydroxy-3-keto-5-methylthiopentene (DHK-MTPene) depending upon the metal bound in the active site. Fe-containing acireductone dioxygenase (Fe-ARD) produces formate and 2-keto-4-methylthiobutyrate (KMTB), the alpha-ketoacid precursor of methionine in the methionine recycle pathway. Ni-containing acireductone dioxygenase (Ni-ARD) produces methylthiopropionate, carbon monoxide and formate, and does not lie on the methionine recycle pathway. This Methylococcus capsulatus (strain ATCC 33009 / NCIMB 11132 / Bath) protein is Acireductone dioxygenase.